The primary structure comprises 418 residues: uncharacterized protein (418 aa).

10 consecutive transmembrane segments (helical) span residues 51-71 (FVMAVGGIAAIVAQTPIGALV), 79-99 (ALVVAGAVLVTAAAVAMPLFA), 110-130 (VTGIASSVFAPALAAITLGAV), 163-183 (FFGPVVVFWVLAGMALISVLA), 224-244 (VIFGAAVVAFHFANAAMLPLV), 258-278 (ALMSSCIVAAQVVMVPVAYVV), 289-309 (PIFLVGFAVLTARGFLYTLSD), 315-335 (VGVQLLDGIGAGIFGALFPLV), 356-376 (ATGIGAALSNLVAGWIVVVAG), and 379-399 (AAFMSLGALAGAGFLLYLVAM).

Belongs to the major facilitator superfamily.

It is found in the cell membrane. This is an uncharacterized protein from Mycobacterium tuberculosis (strain CDC 1551 / Oshkosh).